We begin with the raw amino-acid sequence, 195 residues long: Protein GrpE (195 aa).

Belongs to the GrpE family. Homodimer.

The protein localises to the cytoplasm. Participates actively in the response to hyperosmotic and heat shock by preventing the aggregation of stress-denatured proteins, in association with DnaK and GrpE. It is the nucleotide exchange factor for DnaK and may function as a thermosensor. Unfolded proteins bind initially to DnaJ; upon interaction with the DnaJ-bound protein, DnaK hydrolyzes its bound ATP, resulting in the formation of a stable complex. GrpE releases ADP from DnaK; ATP binding to DnaK triggers the release of the substrate protein, thus completing the reaction cycle. Several rounds of ATP-dependent interactions between DnaJ, DnaK and GrpE are required for fully efficient folding. The polypeptide is Protein GrpE (Blochmanniella floridana).